The primary structure comprises 64 residues: Neurotoxin lambda-MeuTx (64 aa).

Positions 1 to 18 (MSTFIVVFLLLTAILCHA) are cleaved as a signal peptide. The propeptide occupies 19-27 (EHAIDETAR). Cystine bridges form between C29–C43, C36–C49, and C42–C58.

This sequence belongs to the scorpion calcin-like family. In terms of tissue distribution, expressed by the venom gland.

The protein resides in the secreted. Its function is as follows. Voltage-gated potassium channel (Kv) inhibitor. In addition it may increase intracellular calcium release through the activation of nuclear inositol 1,4,5-trisphosphate receptors (ITPR) of cardiomyocytes, thereby causing an increase in the contraction frequency of these cells. The chain is Neurotoxin lambda-MeuTx from Mesobuthus eupeus (Lesser Asian scorpion).